The primary structure comprises 664 residues: Chaperone protein dnaK1 (664 aa).

A Phosphothreonine; by autocatalysis modification is found at T198.

This sequence belongs to the heat shock protein 70 family.

Its function is as follows. Acts as a chaperone. The polypeptide is Chaperone protein dnaK1 (dnaK1) (Prochlorococcus marinus (strain MIT 9313)).